We begin with the raw amino-acid sequence, 456 residues long: UDP-N-acetylmuramate--L-alanine ligase (456 aa).

112 to 118 (GAHGKTS) lines the ATP pocket.

This sequence belongs to the MurCDEF family.

The protein resides in the cytoplasm. The catalysed reaction is UDP-N-acetyl-alpha-D-muramate + L-alanine + ATP = UDP-N-acetyl-alpha-D-muramoyl-L-alanine + ADP + phosphate + H(+). The protein operates within cell wall biogenesis; peptidoglycan biosynthesis. Cell wall formation. This chain is UDP-N-acetylmuramate--L-alanine ligase, found in Desulforapulum autotrophicum (strain ATCC 43914 / DSM 3382 / VKM B-1955 / HRM2) (Desulfobacterium autotrophicum).